The following is a 69-amino-acid chain: Alpha-conotoxin-like Tx1 (69 aa).

A signal peptide spans 1–21 (MGMRMMFVVFLLVVLASTVVS). Residues 22 to 49 (STSGRRAFHGRNAAAKASGLVSLTDRRP) constitute a propeptide that is removed on maturation. Intrachain disulfides connect Cys-51-Cys-57 and Cys-52-Cys-65. The tract at residues 53–55 (SDP) is ser-Xaa-Pro motif, crucial for potent interaction with nAChR. The residue at position 66 (Gly-66) is a Glycine amide.

It belongs to the conotoxin A superfamily. As to expression, expressed by the venom duct.

It is found in the secreted. Alpha-conotoxins act on postsynaptic membranes, they bind to the nicotinic acetylcholine receptors (nAChR) and thus inhibit them. The chain is Alpha-conotoxin-like Tx1 from Conus textile (Cloth-of-gold cone).